Here is a 202-residue protein sequence, read N- to C-terminus: NADH-quinone oxidoreductase subunit B (202 aa).

Positions 81, 82, 146, and 176 each coordinate [4Fe-4S] cluster.

The protein belongs to the complex I 20 kDa subunit family. As to quaternary structure, NDH-1 is composed of 14 different subunits. Subunits NuoB, C, D, E, F, and G constitute the peripheral sector of the complex. [4Fe-4S] cluster serves as cofactor.

The protein localises to the cell inner membrane. It catalyses the reaction a quinone + NADH + 5 H(+)(in) = a quinol + NAD(+) + 4 H(+)(out). Its function is as follows. NDH-1 shuttles electrons from NADH, via FMN and iron-sulfur (Fe-S) centers, to quinones in the respiratory chain. The immediate electron acceptor for the enzyme in this species is believed to be ubiquinone. Couples the redox reaction to proton translocation (for every two electrons transferred, four hydrogen ions are translocated across the cytoplasmic membrane), and thus conserves the redox energy in a proton gradient. This is NADH-quinone oxidoreductase subunit B from Bradyrhizobium diazoefficiens (strain JCM 10833 / BCRC 13528 / IAM 13628 / NBRC 14792 / USDA 110).